Reading from the N-terminus, the 339-residue chain is tRNA (cytidine(56)-2'-O)-methyltransferase (339 aa).

Residues leucine 79 and glycine 105 to valine 109 contribute to the S-adenosyl-L-methionine site. The HD domain occupies leucine 188–glycine 295.

This sequence belongs to the aTrm56 family. In terms of assembly, homodimer.

Its subcellular location is the cytoplasm. It catalyses the reaction cytidine(56) in tRNA + S-adenosyl-L-methionine = 2'-O-methylcytidine(56) in tRNA + S-adenosyl-L-homocysteine + H(+). Functionally, specifically catalyzes the AdoMet-dependent 2'-O-ribose methylation of cytidine at position 56 in tRNAs. The polypeptide is tRNA (cytidine(56)-2'-O)-methyltransferase (Thermoplasma acidophilum (strain ATCC 25905 / DSM 1728 / JCM 9062 / NBRC 15155 / AMRC-C165)).